Consider the following 226-residue polypeptide: Phosphoglycolate phosphatase (226 aa).

Asp-10 serves as the catalytic Nucleophile. Residues Asp-10, Asp-12, and Asp-175 each coordinate Mg(2+).

The protein belongs to the HAD-like hydrolase superfamily. CbbY/CbbZ/Gph/YieH family. The cofactor is Mg(2+).

It catalyses the reaction 2-phosphoglycolate + H2O = glycolate + phosphate. It functions in the pathway organic acid metabolism; glycolate biosynthesis; glycolate from 2-phosphoglycolate: step 1/1. In terms of biological role, specifically catalyzes the dephosphorylation of 2-phosphoglycolate. Is involved in the dissimilation of the intracellular 2-phosphoglycolate formed during the DNA repair of 3'-phosphoglycolate ends, a major class of DNA lesions induced by oxidative stress. In Vibrio cholerae serotype O1 (strain ATCC 39315 / El Tor Inaba N16961), this protein is Phosphoglycolate phosphatase.